A 561-amino-acid polypeptide reads, in one-letter code: 3-hydroxy-3-methylglutaryl-coenzyme A reductase 3 (561 aa).

2 consecutive transmembrane segments (helical) span residues 25–45 (PIRHTNLIFSALFAASLAYLM) and 69–89 (IFGLVASLIYLLSFFGIAFVQ). A linker region spans residues 90–145 (SIVSSSDDEEEDFLVGPARGSSAAAAVAPPPPPSSPAQCSLLGSPHDDAARERMPE). Residues 113-146 (AAAVAPPPPPSSPAQCSLLGSPHDDAARERMPEE) are disordered. Positions 134–143 (PHDDAARERM) are enriched in basic and acidic residues. Positions 146-561 (EDEEIVSSVV…SSKDMSKVIS (416 aa)) are catalytic. E240 functions as the Charge relay system in the catalytic mechanism. N304 carries an N-linked (GlcNAc...) asparagine glycan. Catalysis depends on charge relay system residues K372 and D448. The Proton donor role is filled by H546. An N-linked (GlcNAc...) asparagine glycan is attached at N550.

It belongs to the HMG-CoA reductase family.

It is found in the endoplasmic reticulum membrane. It carries out the reaction (R)-mevalonate + 2 NADP(+) + CoA = (3S)-3-hydroxy-3-methylglutaryl-CoA + 2 NADPH + 2 H(+). The protein operates within metabolic intermediate biosynthesis; (R)-mevalonate biosynthesis; (R)-mevalonate from acetyl-CoA: step 3/3. In terms of biological role, catalyzes the synthesis of mevalonate. The specific precursor of all isoprenoid compounds present in plants. The chain is 3-hydroxy-3-methylglutaryl-coenzyme A reductase 3 (HMG3) from Oryza sativa subsp. japonica (Rice).